The sequence spans 625 residues: DNA mismatch repair protein MutL (625 aa).

The interval 404–427 (PPPRNAPQSTGMPSMAGTGLPATS) is disordered.

The protein belongs to the DNA mismatch repair MutL/HexB family.

In terms of biological role, this protein is involved in the repair of mismatches in DNA. It is required for dam-dependent methyl-directed DNA mismatch repair. May act as a 'molecular matchmaker', a protein that promotes the formation of a stable complex between two or more DNA-binding proteins in an ATP-dependent manner without itself being part of a final effector complex. In Xanthomonas oryzae pv. oryzae (strain MAFF 311018), this protein is DNA mismatch repair protein MutL.